Here is a 376-residue protein sequence, read N- to C-terminus: Glucose-1-phosphate adenylyltransferase (376 aa).

Alpha-D-glucose 1-phosphate contacts are provided by residues Tyr101, Gly166, 181–182 (EK), and Ser192.

It belongs to the bacterial/plant glucose-1-phosphate adenylyltransferase family. As to quaternary structure, homotetramer.

The catalysed reaction is alpha-D-glucose 1-phosphate + ATP + H(+) = ADP-alpha-D-glucose + diphosphate. It participates in glycan biosynthesis; glycogen biosynthesis. Its function is as follows. Involved in the biosynthesis of ADP-glucose, a building block required for the elongation reactions to produce glycogen. Catalyzes the reaction between ATP and alpha-D-glucose 1-phosphate (G1P) to produce pyrophosphate and ADP-Glc. In Bacillus mycoides (strain KBAB4) (Bacillus weihenstephanensis), this protein is Glucose-1-phosphate adenylyltransferase.